The chain runs to 504 residues: UDP-N-acetylmuramoylalanine--D-glutamate ligase (504 aa).

129–135 (GTNGKTT) contacts ATP.

It belongs to the MurCDEF family.

It is found in the cytoplasm. It carries out the reaction UDP-N-acetyl-alpha-D-muramoyl-L-alanine + D-glutamate + ATP = UDP-N-acetyl-alpha-D-muramoyl-L-alanyl-D-glutamate + ADP + phosphate + H(+). It participates in cell wall biogenesis; peptidoglycan biosynthesis. Functionally, cell wall formation. Catalyzes the addition of glutamate to the nucleotide precursor UDP-N-acetylmuramoyl-L-alanine (UMA). This chain is UDP-N-acetylmuramoylalanine--D-glutamate ligase, found in Burkholderia mallei (strain ATCC 23344).